Reading from the N-terminus, the 75-residue chain is Peptide Ctri9610 (75 aa).

Positions 1–22 (MNSKYLFVFLILNVIFIDLCQG) are cleaved as a signal peptide. Lys41 carries the lysine amide modification. A propeptide spanning residues 42–75 (GTRRRELGSQYDYLQDFRKRELDLDDLLSKFPDY) is cleaved from the precursor.

Belongs to the non-disulfide-bridged peptide (NDBP) superfamily. Short antimicrobial peptide (group 4) family. Expressed by the venom gland.

The protein localises to the secreted. The sequence is that of Peptide Ctri9610 from Chaerilus tricostatus (Scorpion).